Consider the following 73-residue polypeptide: Guanine nucleotide-binding protein G(I)/G(S)/G(O) subunit gamma-11 (73 aa).

The interval 54 to 73 is disordered; the sequence is VKGIPEDKNPFKEKGSCIIS. Residue C70 is modified to Cysteine methyl ester. A lipid anchor (S-farnesyl cysteine) is attached at C70. The propeptide at 71–73 is removed in mature form; that stretch reads IIS.

The protein belongs to the G protein gamma family. As to quaternary structure, g proteins are composed of 3 units, alpha, beta and gamma. Interacts with beta-1 and beta-3, but not with beta-2.

Its subcellular location is the cell membrane. Functionally, guanine nucleotide-binding proteins (G proteins) are involved as a modulator or transducer in various transmembrane signaling systems. The beta and gamma chains are required for the GTPase activity, for replacement of GDP by GTP, and for G protein-effector interaction. The protein is Guanine nucleotide-binding protein G(I)/G(S)/G(O) subunit gamma-11 (GNG11) of Bos taurus (Bovine).